We begin with the raw amino-acid sequence, 116 residues long: Nucleoid-associated protein PMT9312_0020 (116 aa).

It belongs to the YbaB/EbfC family. In terms of assembly, homodimer.

The protein localises to the cytoplasm. It is found in the nucleoid. Its function is as follows. Binds to DNA and alters its conformation. May be involved in regulation of gene expression, nucleoid organization and DNA protection. The polypeptide is Nucleoid-associated protein PMT9312_0020 (Prochlorococcus marinus (strain MIT 9312)).